A 588-amino-acid polypeptide reads, in one-letter code: Serine/threonine-protein phosphatase 2A 65 kDa regulatory subunit A alpha isoform (588 aa).

HEAT repeat units follow at residues 2–42 (AMVD…ALGE), 44–80 (RTRKELIPFLSENSDDDDEVLLAMAEELGVFIPFVGG), 81–119 (IEFAHVLLPPLESLCTVEETCVREKAVESLCKIGSQMKE), 158–196 (DVLKTELRATYSQLCKDDMPMVRRAAASNLGKFATTVES), 197–235 (TFLIAEIMTMFDDLTKDDQDSVRLLAVEGCAALGKLLEP), 236–274 (QDCVARILPVIVNFSQDKSWRVRYMVANQLYELCEAVGP), 275–313 (DCTRTDLVPAYVRLLRDNEAEVRIAAAGKVTKFCRLLNP), 315–352 (LAIQHILPCVKELSSDSSQHVRSALASVIMGMAPILGK), 353–391 (DSTIEHLLPIFLSLLKDEFPDVRLNIISKLDQVNQVIGI), 393–430 (LLSQSLLPAIVELAEDRHWRVRLAIIEYVPLLASQLGI), 432–469 (FFDDKLGALCMQWLQDKVYSIREAAANNLKRLAEEFGP), 470–508 (EWAMQHLVPQVLDMVNNPHYLHRMMVLRAISLMAPVMGS), 509–547 (EITCSKFLPVVVEASKDRVPNIKFNVAKLLQSLIPIVDQ), and 549–586 (VVDKTIRQCLVDLSEDPDVDVRYFANQALNSIDGSTAA).

This sequence belongs to the phosphatase 2A regulatory subunit A family. In terms of assembly, PP2A consists of a common heterodimeric core enzyme, composed of a 36 kDa catalytic subunit (subunit C) and a 65 kDa constant regulatory subunit (subunit A), that associates with a variety of regulatory subunits such as subunits B (the R2/B/PR55/B55, R3/B''/PR72/PR130/PR59 and R5/B'/B56 families) and the regulatory subunits TON2. Interacts with CYP20-1/ROC7. Also interacts with phosphatidic acid (PA), a lipid signaling molecule. Interacts with CHIP. Interacts with SIC/RON3. Post-translationally, ubiquitinated. CHIP-mediated ubiquitination enhances phosphatase activity after an abiotic stress such as low temperature or darkness. Mostly expressed in cell-dividing tissues such as apical meristems. Ubiquitous, with higher levels in roots and flowers (at protein level).

The protein localises to the cytoplasm. The protein resides in the cytosol. Its subcellular location is the nucleus. In terms of biological role, the A subunit of protein phosphatase 2A serves as a scaffolding molecule to coordinate the assembly of the catalytic subunit and a variable regulatory B subunit. Seems to act as a positive regulator of PP2A catalytic activity. Confers resistance to phosphatase inhibitors such as okadaic acid and cantharidin. Involved during developmental process such as seedling and floral developments, root gravitropism, and stomatal opening regulation. Involved in the regulation of auxin efflux, especially during basipetal (tips to base) auxin transport in roots, and appears to contribute to the perception of auxin efflux inhibitors such as 1-N-naphthylphthalamic acid (NPA) and to semicarbazone I (substituted phenylsemicarbazone of 2-acetylarylcarboxylic acids) (SCB-I). Modulates the magnitude of ethylene response in the hypocotyl and stem, and functions as a general positive transducer of early ABA signaling. The holoenzyme composed of PP2AA1, PP2A4 and B'ZETA or B'ETA acts as a negative regulator of plant innate immunity by controlling BAK1 phosphorylation state and activation in surface-localized immune receptor complexes. In Arabidopsis thaliana (Mouse-ear cress), this protein is Serine/threonine-protein phosphatase 2A 65 kDa regulatory subunit A alpha isoform (PP2AA1).